The sequence spans 138 residues: Cofilin (138 aa).

One can recognise an ADF-H domain in the interval 2–136 (SSGVQPTQEC…TKDALFEKAT (135 aa)).

It belongs to the actin-binding proteins ADF family.

It localises to the cytoplasm. The protein resides in the cytoskeleton. It is found in the nucleus matrix. Functionally, controls reversibly actin polymerization and depolymerization in a pH-sensitive manner. It has the ability to bind G- and F-actin in a 1:1 ratio of cofilin to actin. Binding to F-actin is regulated by tropomyosin. It is the major component of intranuclear and cytoplasmic actin rods. Required for accumulation of actin at the cell division site via depolymerizing actin at the cell ends. In association with myosin II has a role in the assembly of the contractile ring via severing actin filaments. Involved in the maintenance of the contractile ring once formed. In association with profilin and capping protein, has a role in the mitotic reorganization of the actin cytoskeleton. In Cryptococcus neoformans var. neoformans serotype D (strain B-3501A) (Filobasidiella neoformans), this protein is Cofilin (COF1).